The primary structure comprises 441 residues: D-aminoacyl-tRNA deacylase (441 aa).

The protein belongs to the DtdA deacylase family. Monomer. Zn(2+) is required as a cofactor.

The enzyme catalyses a D-aminoacyl-tRNA + H2O = a tRNA + a D-alpha-amino acid + H(+). It catalyses the reaction glycyl-tRNA(Ala) + H2O = tRNA(Ala) + glycine + H(+). Its function is as follows. D-aminoacyl-tRNA deacylase with broad substrate specificity. By recycling D-aminoacyl-tRNA to D-amino acids and free tRNA molecules, this enzyme counteracts the toxicity associated with the formation of D-aminoacyl-tRNA entities in vivo. This chain is D-aminoacyl-tRNA deacylase, found in Natronomonas pharaonis (strain ATCC 35678 / DSM 2160 / CIP 103997 / JCM 8858 / NBRC 14720 / NCIMB 2260 / Gabara) (Halobacterium pharaonis).